A 420-amino-acid polypeptide reads, in one-letter code: D-inositol 3-phosphate glycosyltransferase (420 aa).

Histidine 13 contacts 1D-myo-inositol 3-phosphate. UDP-N-acetyl-alpha-D-glucosamine is bound by residues 19–20 (QP) and glycine 27. 1D-myo-inositol 3-phosphate is bound by residues 24–29 (DAGGMN), lysine 82, tyrosine 115, threonine 139, and arginine 159. Arginine 233, lysine 238, and valine 294 together coordinate UDP-N-acetyl-alpha-D-glucosamine. Mg(2+)-binding residues include phenylalanine 303, arginine 304, and alanine 306. Glutamate 316 and glutamate 324 together coordinate UDP-N-acetyl-alpha-D-glucosamine. Threonine 330 contacts Mg(2+).

It belongs to the glycosyltransferase group 1 family. MshA subfamily. In terms of assembly, homodimer.

The enzyme catalyses 1D-myo-inositol 3-phosphate + UDP-N-acetyl-alpha-D-glucosamine = 1D-myo-inositol 2-acetamido-2-deoxy-alpha-D-glucopyranoside 3-phosphate + UDP + H(+). Its function is as follows. Catalyzes the transfer of a N-acetyl-glucosamine moiety to 1D-myo-inositol 3-phosphate to produce 1D-myo-inositol 2-acetamido-2-deoxy-glucopyranoside 3-phosphate in the mycothiol biosynthesis pathway. The protein is D-inositol 3-phosphate glycosyltransferase of Pseudarthrobacter chlorophenolicus (strain ATCC 700700 / DSM 12829 / CIP 107037 / JCM 12360 / KCTC 9906 / NCIMB 13794 / A6) (Arthrobacter chlorophenolicus).